Consider the following 366-residue polypeptide: Beta sliding clamp (366 aa).

Belongs to the beta sliding clamp family. As to quaternary structure, forms a ring-shaped head-to-tail homodimer around DNA which binds and tethers DNA polymerases and other proteins to the DNA. The DNA replisome complex has a single clamp-loading complex (3 tau and 1 each of delta, delta', psi and chi subunits) which binds 3 Pol III cores (1 core on the leading strand and 2 on the lagging strand) each with a beta sliding clamp dimer. Additional proteins in the replisome are other copies of gamma, psi and chi, Ssb, DNA helicase and RNA primase.

Its subcellular location is the cytoplasm. Confers DNA tethering and processivity to DNA polymerases and other proteins. Acts as a clamp, forming a ring around DNA (a reaction catalyzed by the clamp-loading complex) which diffuses in an ATP-independent manner freely and bidirectionally along dsDNA. Initially characterized for its ability to contact the catalytic subunit of DNA polymerase III (Pol III), a complex, multichain enzyme responsible for most of the replicative synthesis in bacteria; Pol III exhibits 3'-5' exonuclease proofreading activity. The beta chain is required for initiation of replication as well as for processivity of DNA replication. This chain is Beta sliding clamp (dnaN), found in Chlamydia muridarum (strain MoPn / Nigg).